The following is a 601-amino-acid chain: A-type ATP synthase subunit A (601 aa).

Residue 236–243 (GPFGSGKT) participates in ATP binding.

It belongs to the ATPase alpha/beta chains family. In terms of assembly, has multiple subunits with at least A(3), B(3), C, D, E, F, H, I and proteolipid K(x).

The protein localises to the cell membrane. It carries out the reaction ATP + H2O + 4 H(+)(in) = ADP + phosphate + 5 H(+)(out). In terms of biological role, component of the A-type ATP synthase that produces ATP from ADP in the presence of a proton gradient across the membrane. The A chain is the catalytic subunit. The chain is A-type ATP synthase subunit A from Hyperthermus butylicus (strain DSM 5456 / JCM 9403 / PLM1-5).